We begin with the raw amino-acid sequence, 214 residues long: MRIVLLGAPGAGKGTQAQFIMEKHGIPQISTGDMLRAAIKAGTELGLKAKAVMDAGQLVSDDIIIGLVKERIAQPDCANGFLLDGFPRTIPQAQAMKDAGVAVDFVLEFDVPDEEIVKRMSGRRVHSGSGRTYHVVFNPPKVEGKDDVTGEDLVIRADDEETTVRKRLDVYHQQTAPLIGFYGKEAEAGNTRYVKIDGTQPVDLVSKQLATILG.

10–15 (GAGKGT) is an ATP binding site. The NMP stretch occupies residues 30–59 (STGDMLRAAIKAGTELGLKAKAVMDAGQLV). Residues Thr-31, Arg-36, 57–59 (QLV), 85–88 (GFPR), and Gln-92 each bind AMP. The LID stretch occupies residues 122–159 (GRRVHSGSGRTYHVVFNPPKVEGKDDVTGEDLVIRADD). ATP is bound by residues Arg-123 and 132-133 (TY). The AMP site is built by Arg-156 and Arg-167. An ATP-binding site is contributed by Gln-200.

Belongs to the adenylate kinase family. In terms of assembly, monomer.

The protein resides in the cytoplasm. It catalyses the reaction AMP + ATP = 2 ADP. The protein operates within purine metabolism; AMP biosynthesis via salvage pathway; AMP from ADP: step 1/1. In terms of biological role, catalyzes the reversible transfer of the terminal phosphate group between ATP and AMP. Plays an important role in cellular energy homeostasis and in adenine nucleotide metabolism. The chain is Adenylate kinase from Aeromonas hydrophila subsp. hydrophila (strain ATCC 7966 / DSM 30187 / BCRC 13018 / CCUG 14551 / JCM 1027 / KCTC 2358 / NCIMB 9240 / NCTC 8049).